The sequence spans 89 residues: Small ribosomal subunit protein uS15 (89 aa).

Belongs to the universal ribosomal protein uS15 family. As to quaternary structure, part of the 30S ribosomal subunit. Forms a bridge to the 50S subunit in the 70S ribosome, contacting the 23S rRNA.

Functionally, one of the primary rRNA binding proteins, it binds directly to 16S rRNA where it helps nucleate assembly of the platform of the 30S subunit by binding and bridging several RNA helices of the 16S rRNA. In terms of biological role, forms an intersubunit bridge (bridge B4) with the 23S rRNA of the 50S subunit in the ribosome. This chain is Small ribosomal subunit protein uS15, found in Shewanella halifaxensis (strain HAW-EB4).